The sequence spans 296 residues: Glycine and tyrosine-rich protein (296 aa).

The N-terminal stretch at 1–18 is a signal peptide; that stretch reads MKVLVTALIISFSTAVLT. Positions 157-280 are disordered; the sequence is MESRLRPQAT…NQPEETPAPN (124 aa). Low complexity predominate over residues 172-264; it reads TGGQPSTGGK…STGGQPSTGG (93 aa).

In terms of tissue distribution, component of the acid-insoluble and acid-soluble organic matrix of calcified layers of the shell (at protein level).

It localises to the secreted. The protein is Glycine and tyrosine-rich protein of Lottia gigantea (Giant owl limpet).